The chain runs to 472 residues: CAAX prenyl protease 1 homolog (472 aa).

At 1 to 8 (MDVGGALD) the chain is on the lumenal side. Residues 9–29 (LYGCSVNVYNAILIFIWVLFL) traverse the membrane as a helical segment. Topologically, residues 30 to 75 (WETYINLRQLKVAKRVTESPEEIKCLMNDVDFDKSRRYAIDKMNFD) are cytoplasmic. The chain crosses the membrane as a helical span at residues 76 to 96 (IVSGFYNILSLSAVLYFQLIA). At 97-124 (WAWHKSQEHMLFVCSYAPRSFGTTEGSE) the chain is on the lumenal side. Residues 125-145 (ILFSLLFTVYVALFQFFESLP) traverse the membrane as a helical segment. Residues 146–175 (WSYYRHFVIEERYGFNKQTIGFFIKDRLKS) lie on the Cytoplasmic side of the membrane. Residues 176–196 (LAVGLVIGLPIISMLVWIIKA) traverse the membrane as a helical segment. Residues 197 to 207 (GGHYFYIYAYG) lie on the Lumenal side of the membrane. A helical membrane pass occupies residues 208 to 228 (FTFVVSFIIMFIYPEFIAPIF). The Cytoplasmic segment spans residues 229–340 (DRYEHFPDCE…LGHWKLKHMT (112 aa)). H329 serves as a coordination point for Zn(2+). E330 is a catalytic residue. Residue H333 participates in Zn(2+) binding. A helical transmembrane segment spans residues 341–361 (FNLIIAQINIFFMFFAFGQLI). Topologically, residues 362–382 (NVDQLFVDFGFPPSTAPILIR) are lumenal. The helical transmembrane segment at 383–403 (LIVVFQFIFMPYSSVLEFLMT) threads the bilayer. Topologically, residues 404–472 (MLSRKFEFQA…AIDAKMGKEK (69 aa)) are cytoplasmic. E410 contacts Zn(2+). The active-site Proton donor is the D414.

Belongs to the peptidase M48A family. Homodimer; disulfide-linked. Zn(2+) serves as cofactor.

It localises to the endoplasmic reticulum membrane. The enzyme catalyses Hydrolyzes the peptide bond -P2-(S-farnesyl or geranylgeranyl)C-P1'-P2'-P3'-COOH where P1' and P2' are amino acids with aliphatic side chains and P3' is any C-terminal residue.. Its activity is regulated as follows. Inhibited by ethylenediaminetetraacetic acid (EDTA) but not by serine, aspartic or cysteine protease inhibitors. Inhibited by high concentration of Zn(2+) (&gt; 0.1 mM). Zinc-dependent metalloproteinase. Proteolytically removes the C-terminal three residues of farnesylated proteins. This is CAAX prenyl protease 1 homolog from Taenia solium (Pork tapeworm).